The primary structure comprises 344 residues: 4-dimethylallyltryptophan N-methyltransferase easF (344 aa).

It belongs to the methyltransferase superfamily. As to quaternary structure, homodimer.

It catalyses the reaction 4-(3-methylbut-2-enyl)-L-tryptophan + S-adenosyl-L-methionine = 4-(3-methylbut-2-enyl)-L-abrine + S-adenosyl-L-homocysteine + H(+). It participates in alkaloid biosynthesis; ergot alkaloid biosynthesis. Functionally, 4-dimethylallyltryptophan N-methyltransferase; part of the gene cluster that mediates the biosynthesis of fungal ergot alkaloid ergovaline, the predominant ergopeptine product in E.festucae var. lolii. DmaW catalyzes the first step of ergot alkaloid biosynthesis by condensing dimethylallyl diphosphate (DMAP) and tryptophan to form 4-dimethylallyl-L-tryptophan. The second step is catalyzed by the methyltransferase easF that methylates 4-dimethylallyl-L-tryptophan in the presence of S-adenosyl-L-methionine, resulting in the formation of 4-dimethylallyl-L-abrine. The catalase easC and the FAD-dependent oxidoreductase easE then transform 4-dimethylallyl-L-abrine to chanoclavine-I which is further oxidized by easD in the presence of NAD(+), resulting in the formation of chanoclavine-I aldehyde. Agroclavine dehydrogenase easG then mediates the conversion of chanoclavine-I aldehyde to agroclavine via a non-enzymatic adduct reaction: the substrate is an iminium intermediate that is formed spontaneously from chanoclavine-I aldehyde in the presence of glutathione. The presence of easA is not required to complete this reaction. Further conversion of agroclavine to paspalic acid is a two-step process involving oxidation of agroclavine to elymoclavine and of elymoclavine to paspalic acid, the second step being performed by the elymoclavine oxidase cloA. Paspalic acid is then further converted to D-lysergic acid. Ergovaline is assembled from D-lysergic acid and three different amino acids by the D-lysergyl-peptide-synthetase composed of a monomudular (lpsB) and a trimodular (lpsA) nonribosomal peptide synthetase subunit. The chain is 4-dimethylallyltryptophan N-methyltransferase easF from Epichloe festucae var. lolii (Neotyphodium lolii).